The sequence spans 326 residues: 4-hydroxy-3-methylbut-2-enyl diphosphate reductase (326 aa).

Residue Cys22 coordinates [4Fe-4S] cluster. (2E)-4-hydroxy-3-methylbut-2-enyl diphosphate is bound by residues His51 and His84. Residues His51 and His84 each coordinate dimethylallyl diphosphate. The isopentenyl diphosphate site is built by His51 and His84. Cys106 is a [4Fe-4S] cluster binding site. His134 contacts (2E)-4-hydroxy-3-methylbut-2-enyl diphosphate. His134 provides a ligand contact to dimethylallyl diphosphate. His134 is a binding site for isopentenyl diphosphate. The active-site Proton donor is Glu136. (2E)-4-hydroxy-3-methylbut-2-enyl diphosphate is bound at residue Thr174. Cys204 provides a ligand contact to [4Fe-4S] cluster. The (2E)-4-hydroxy-3-methylbut-2-enyl diphosphate site is built by Ser232, Ser233, Asn234, and Ser276. 4 residues coordinate dimethylallyl diphosphate: Ser232, Ser233, Asn234, and Ser276. Isopentenyl diphosphate is bound by residues Ser232, Ser233, Asn234, and Ser276.

The protein belongs to the IspH family. [4Fe-4S] cluster serves as cofactor.

It catalyses the reaction isopentenyl diphosphate + 2 oxidized [2Fe-2S]-[ferredoxin] + H2O = (2E)-4-hydroxy-3-methylbut-2-enyl diphosphate + 2 reduced [2Fe-2S]-[ferredoxin] + 2 H(+). The catalysed reaction is dimethylallyl diphosphate + 2 oxidized [2Fe-2S]-[ferredoxin] + H2O = (2E)-4-hydroxy-3-methylbut-2-enyl diphosphate + 2 reduced [2Fe-2S]-[ferredoxin] + 2 H(+). It participates in isoprenoid biosynthesis; dimethylallyl diphosphate biosynthesis; dimethylallyl diphosphate from (2E)-4-hydroxy-3-methylbutenyl diphosphate: step 1/1. Its pathway is isoprenoid biosynthesis; isopentenyl diphosphate biosynthesis via DXP pathway; isopentenyl diphosphate from 1-deoxy-D-xylulose 5-phosphate: step 6/6. In terms of biological role, catalyzes the conversion of 1-hydroxy-2-methyl-2-(E)-butenyl 4-diphosphate (HMBPP) into a mixture of isopentenyl diphosphate (IPP) and dimethylallyl diphosphate (DMAPP). Acts in the terminal step of the DOXP/MEP pathway for isoprenoid precursor biosynthesis. This Bordetella bronchiseptica (strain ATCC BAA-588 / NCTC 13252 / RB50) (Alcaligenes bronchisepticus) protein is 4-hydroxy-3-methylbut-2-enyl diphosphate reductase.